A 285-amino-acid polypeptide reads, in one-letter code: tRNA pseudouridine synthase A (285 aa).

The Nucleophile role is filled by Asp69. Tyr127 is a substrate binding site.

Belongs to the tRNA pseudouridine synthase TruA family. Homodimer.

The enzyme catalyses uridine(38/39/40) in tRNA = pseudouridine(38/39/40) in tRNA. Formation of pseudouridine at positions 38, 39 and 40 in the anticodon stem and loop of transfer RNAs. The sequence is that of tRNA pseudouridine synthase A from Pseudomonas aeruginosa (strain ATCC 15692 / DSM 22644 / CIP 104116 / JCM 14847 / LMG 12228 / 1C / PRS 101 / PAO1).